The chain runs to 699 residues: tRNA(Met) cytidine acetyltransferase TmcA (699 aa).

ATP is bound by residues Gln178, 200–209 (GRGKSTLAGM), and Arg322. The N-acetyltransferase domain occupies 408–547 (MHIASAQVAG…SGCYSAMAIL (140 aa)). Acetyl-CoA is bound by residues 475 to 477 (IAV) and 482 to 488 (RRQGIGR).

It belongs to the RNA cytidine acetyltransferase family. TmcA subfamily.

It localises to the cytoplasm. It carries out the reaction cytidine(34) in elongator tRNA(Met) + acetyl-CoA + ATP + H2O = N(4)-acetylcytidine(34) in elongator tRNA(Met) + ADP + phosphate + CoA + H(+). Catalyzes the formation of N(4)-acetylcytidine (ac(4)C) at the wobble position of tRNA(Met), by using acetyl-CoA as an acetyl donor and ATP (or GTP). The protein is tRNA(Met) cytidine acetyltransferase TmcA of Pectobacterium atrosepticum (strain SCRI 1043 / ATCC BAA-672) (Erwinia carotovora subsp. atroseptica).